A 426-amino-acid polypeptide reads, in one-letter code: Serine hydroxymethyltransferase (426 aa).

(6S)-5,6,7,8-tetrahydrofolate is bound by residues L122 and 126-128 (GHL). K231 is modified (N6-(pyridoxal phosphate)lysine). (6S)-5,6,7,8-tetrahydrofolate-binding positions include E247 and 355-357 (SPF).

This sequence belongs to the SHMT family. As to quaternary structure, homodimer. Requires pyridoxal 5'-phosphate as cofactor.

Its subcellular location is the cytoplasm. The catalysed reaction is (6R)-5,10-methylene-5,6,7,8-tetrahydrofolate + glycine + H2O = (6S)-5,6,7,8-tetrahydrofolate + L-serine. It participates in one-carbon metabolism; tetrahydrofolate interconversion. The protein operates within amino-acid biosynthesis; glycine biosynthesis; glycine from L-serine: step 1/1. Its function is as follows. Catalyzes the reversible interconversion of serine and glycine with tetrahydrofolate (THF) serving as the one-carbon carrier. This reaction serves as the major source of one-carbon groups required for the biosynthesis of purines, thymidylate, methionine, and other important biomolecules. Also exhibits THF-independent aldolase activity toward beta-hydroxyamino acids, producing glycine and aldehydes, via a retro-aldol mechanism. The polypeptide is Serine hydroxymethyltransferase (Cyanothece sp. (strain PCC 7425 / ATCC 29141)).